Here is a 134-residue protein sequence, read N- to C-terminus: UPF0102 protein Dvul_2148 (134 aa).

This sequence belongs to the UPF0102 family.

The sequence is that of UPF0102 protein Dvul_2148 from Nitratidesulfovibrio vulgaris (strain DP4) (Desulfovibrio vulgaris).